Consider the following 303-residue polypeptide: Methionyl-tRNA formyltransferase (303 aa).

108 to 111 (SDLP) is a binding site for (6S)-5,6,7,8-tetrahydrofolate.

It belongs to the Fmt family.

The catalysed reaction is L-methionyl-tRNA(fMet) + (6R)-10-formyltetrahydrofolate = N-formyl-L-methionyl-tRNA(fMet) + (6S)-5,6,7,8-tetrahydrofolate + H(+). Functionally, attaches a formyl group to the free amino group of methionyl-tRNA(fMet). The formyl group appears to play a dual role in the initiator identity of N-formylmethionyl-tRNA by promoting its recognition by IF2 and preventing the misappropriation of this tRNA by the elongation apparatus. This is Methionyl-tRNA formyltransferase from Rickettsia rickettsii (strain Iowa).